A 122-amino-acid chain; its full sequence is Large ribosomal subunit protein uL14 (122 aa).

Belongs to the universal ribosomal protein uL14 family. As to quaternary structure, part of the 50S ribosomal subunit. Forms a cluster with proteins L3 and L19. In the 70S ribosome, L14 and L19 interact and together make contacts with the 16S rRNA in bridges B5 and B8.

Functionally, binds to 23S rRNA. Forms part of two intersubunit bridges in the 70S ribosome. The polypeptide is Large ribosomal subunit protein uL14 (Nitrosomonas eutropha (strain DSM 101675 / C91 / Nm57)).